A 413-amino-acid polypeptide reads, in one-letter code: Multifunctional CCA protein (413 aa).

ATP-binding residues include glycine 8 and arginine 11. Residues glycine 8 and arginine 11 each contribute to the CTP site. Mg(2+) is bound by residues aspartate 21 and aspartate 23. The ATP site is built by arginine 91, arginine 137, and arginine 140. Residues arginine 91, arginine 137, and arginine 140 each coordinate CTP. Positions 228–329 (TGVHTLMTLS…VKLFDAIDAW (102 aa)) constitute an HD domain.

Belongs to the tRNA nucleotidyltransferase/poly(A) polymerase family. Bacterial CCA-adding enzyme type 1 subfamily. In terms of assembly, monomer. Can also form homodimers and oligomers. It depends on Mg(2+) as a cofactor. The cofactor is Ni(2+).

The enzyme catalyses a tRNA precursor + 2 CTP + ATP = a tRNA with a 3' CCA end + 3 diphosphate. The catalysed reaction is a tRNA with a 3' CCA end + 2 CTP + ATP = a tRNA with a 3' CCACCA end + 3 diphosphate. Catalyzes the addition and repair of the essential 3'-terminal CCA sequence in tRNAs without using a nucleic acid template. Adds these three nucleotides in the order of C, C, and A to the tRNA nucleotide-73, using CTP and ATP as substrates and producing inorganic pyrophosphate. tRNA 3'-terminal CCA addition is required both for tRNA processing and repair. Also involved in tRNA surveillance by mediating tandem CCA addition to generate a CCACCA at the 3' terminus of unstable tRNAs. While stable tRNAs receive only 3'-terminal CCA, unstable tRNAs are marked with CCACCA and rapidly degraded. The sequence is that of Multifunctional CCA protein from Salmonella typhi.